The primary structure comprises 1217 residues: Splicing factor 3B subunit 3 (1217 aa).

Interaction with PHF5A, SF3B1 and SF3B5 regions lie at residues glutamate 105–glutamine 119 and asparagine 145–tyrosine 168. Serine 156 is modified (phosphoserine). Interaction with SF3B1 and SF3B5 regions lie at residues aspartate 193–histidine 231 and arginine 786–histidine 804. An interaction with SF3B1 region spans residues threonine 1028 to lysine 1049. The interval threonine 1100 to serine 1123 is interaction with SF3B5. Threonine 1200 is subject to Phosphothreonine.

This sequence belongs to the RSE1 family. As to quaternary structure, component of the 17S U2 SnRNP complex, a ribonucleoprotein complex that contains small nuclear RNA (snRNA) U2 and a number of specific proteins. Part of the SF3B subcomplex of the 17S U2 SnRNP complex. SF3B associates with the splicing subcomplex SF3A and a 12S RNA unit to form the U2 small nuclear ribonucleoproteins complex (U2 snRNP). Within the SF3B subcomplex, interacts directly with SF3B1 (via HEAT domain), SF3B5 and PHF5A. Identified in the spliceosome A complex; remains associated with the spliceosome throughout the splicing process. Component of the spliceosome B complex. Identified in the spliceosome C complex. Identified in the spliceosome E complex. Component of the minor (U12-type spliceosome) spliceosome. Within this complex, interacts with SCNM1. Associates with the STAGA transcription coactivator-HAT complex. Interacts with SUPT3H. Interacts with TAF3.

Its subcellular location is the nucleus. Its function is as follows. Component of the 17S U2 SnRNP complex of the spliceosome, a large ribonucleoprotein complex that removes introns from transcribed pre-mRNAs. The 17S U2 SnRNP complex (1) directly participates in early spliceosome assembly and (2) mediates recognition of the intron branch site during pre-mRNA splicing by promoting the selection of the pre-mRNA branch-site adenosine, the nucleophile for the first step of splicing. Within the 17S U2 SnRNP complex, SF3B3 is part of the SF3B subcomplex, which is required for 'A' complex assembly formed by the stable binding of U2 snRNP to the branchpoint sequence in pre-mRNA. Sequence independent binding of SF3A and SF3B subcomplexes upstream of the branch site is essential, it may anchor U2 snRNP to the pre-mRNA. May also be involved in the assembly of the 'E' complex. Also acts as a component of the minor spliceosome, which is involved in the splicing of U12-type introns in pre-mRNAs. This Bos taurus (Bovine) protein is Splicing factor 3B subunit 3 (SF3B3).